The following is a 1480-amino-acid chain: Cystic fibrosis transmembrane conductance regulator (1480 aa).

Residues 1–77 (MQRSPLEKAS…KLINALRRCF (77 aa)) are Cytoplasmic-facing. A helical membrane pass occupies residues 78–98 (FWRFMFYGIFLYLGEVTKAVQ). Residues 81 to 365 (FMFYGIFLYL…WAVQTWYDSL (285 aa)) form the ABC transmembrane type-1 1 domain. The Extracellular segment spans residues 99 to 122 (PLLLGRIIASYDPDNKEERSIAIY). Residues 123-146 (LGIGLCLLFIVRTLLLHPAIFGLH) form a helical membrane-spanning segment. The Cytoplasmic portion of the chain corresponds to 147-195 (HIGMQMRIAMFSLIYKKTLKLSSRVLDKISIGQLVSLLSNNLNKFDEGL). The helical transmembrane segment at 196–216 (ALAHFVWIAPLQVALLMGLIW) threads the bilayer. Over 217–222 (ELLQAS) the chain is Extracellular. Residues 223 to 243 (AFCGLGFLIVLALFQAGLGRM) form a helical membrane-spanning segment. At 244–298 (MMKYRDQRAGKISERLVITSEMIENIQSVKAYCWEEAMEKMIENLRQTELKLTRK) the chain is on the cytoplasmic side. A helical transmembrane segment spans residues 299 to 319 (AAYVRYFNSSAFFFSGFFVVF). Residues 320–339 (LSVLPYALIKGIILRKIFTT) lie on the Extracellular side of the membrane. The chain crosses the membrane as a helical span at residues 340–358 (ISFCIVLRMAVTRQFPWAV). Residues 359–858 (QTWYDSLGAI…YLRYITVHKS (500 aa)) lie on the Cytoplasmic side of the membrane. ATP contacts are provided by residues W401, S434, 458-465 (GSTGAGKT), and Q493. The ABC transporter 1 domain occupies 423-646 (NGDDSLFFSN…QPDFSSKLMG (224 aa)). C524 carries S-palmitoyl cysteine lipidation. S549 is subject to Phosphoserine. The disordered R region stretch occupies residues 654–831 (SAERRNSILT…EEINEEDLKE (178 aa)). Phosphoserine; by PKA occurs at positions 660 and 670. The residue at position 686 (S686) is a Phosphoserine; by PKC. K688 is covalently cross-linked (Glycyl lysine isopeptide (Lys-Gly) (interchain with G-Cter in ubiquitin)). A phosphoserine; by PKA mark is found at S700 and S712. A Phosphothreonine modification is found at T717. Phosphoserine; by PKA occurs at positions 737, 753, and 768. At S790 the chain carries Phosphoserine; by PKC. Residues S795 and S813 each carry the phosphoserine; by PKA modification. Residues 859–879 (LIFVLIWCLVIFLAEVAASLV) form a helical membrane-spanning segment. One can recognise an ABC transmembrane type-1 2 domain in the interval 859–1155 (LIFVLIWCLV…AVNSSIDVDS (297 aa)). At 880–918 (VLWLLGNTPLQDKGNSTHSRNNSYAVIITSTSSYYVFYI) the chain is on the extracellular side. Residues N894 and N900 are each glycosylated (N-linked (GlcNAc...) asparagine). A discontinuously helical membrane pass occupies residues 919 to 939 (YVGVADTLLAMGFFRGLPLVH). Over 940–990 (TLITVSKILHHKMLHSVLQAPMSTLNTLKAGGILNRFSKDIAILDDLLPLT) the chain is Cytoplasmic. Residues 991-1011 (IFDFIQLLLIVIGAIAVVAVL) traverse the membrane as a helical segment. Residues 1012–1013 (QP) lie on the Extracellular side of the membrane. The chain crosses the membrane as a helical span at residues 1014–1034 (YIFVATVPVIVAFIMLRAYFL). Topologically, residues 1035–1095 (QTSQQLKQLE…TANWFLYLST (61 aa)) are cytoplasmic. A helical membrane pass occupies residues 1096–1116 (LRWFQMRIEMIFVIFFIAVTF). Residues 1117–1130 (ISILTTGEGEGRVG) lie on the Extracellular side of the membrane. Residues 1131 to 1151 (IILTLAMNIMSTLQWAVNSSI) traverse the membrane as a helical segment. Residues 1152-1480 (DVDSLMRSVS…TEEEVQDTRL (329 aa)) are Cytoplasmic-facing. The ABC transporter 2 domain maps to 1210 to 1443 (MTVKDLTAKY…RSLFRQAISP (234 aa)). ATP contacts are provided by residues Y1219 and 1244 to 1251 (GRTGSGKS). Positions 1386-1480 (RTLKQAFADC…TEEEVQDTRL (95 aa)) are interaction with GORASP2. C1395 carries S-palmitoyl cysteine lipidation. 2 positions are modified to phosphoserine: S1444 and S1456. Positions 1452–1480 (HRNSSKCKSKPQIAALKEETEEEVQDTRL) are disordered. The span at 1470–1480 (ETEEEVQDTRL) shows a compositional bias: acidic residues. The short motif at 1478 to 1480 (TRL) is the PDZ-binding element.

Belongs to the ABC transporter superfamily. ABCC family. CFTR transporter (TC 3.A.1.202) subfamily. In terms of assembly, monomer; does not require oligomerization for channel activity. May form oligomers in the membrane. Interacts with SLC26A3, SLC26A6 and SHANK2. Interacts with NHERF1 and MYO6. Interacts (via C-terminus) with GOPC (via PDZ domain); this promotes CFTR internalization and thereby decreases channel activity. Interacts with SLC4A7 through NHERF1. Found in a complex with MYO5B and RAB11A. Interacts with ANO1. Interacts with SLC26A8. Interacts with AHCYL1; the interaction increases CFTR activity. Interacts with CSE1L. The core-glycosylated form interacts with GORASP2 (via PDZ GRASP-type 1 domain) in respone to ER stress. Interacts with MARCHF2; the interaction leads to CFTR ubiqtuitination and degradation. Interacts with ADGRG2. In terms of processing, N-glycosylated. Post-translationally, phosphorylated; cAMP treatment promotes phosphorylation and activates the channel. Dephosphorylation decreases the ATPase activity (in vitro). Phosphorylation at PKA sites activates the channel. Phosphorylation at PKC sites enhances the response to phosphorylation by PKA. Phosphorylated by AMPK; this inhibits channel activity. Ubiquitinated, leading to its degradation in the lysosome. Deubiquitination by USP10 in early endosomes enhances its endocytic recycling to the cell membrane. Ubiquitinated by RNF185 during ER stress. Ubiquitinated by MARCHF2. As to expression, expressed in the respiratory airway, including bronchial epithelium, and in the female reproductive tract, including oviduct (at protein level). Detected in pancreatic intercalated ducts in the exocrine tissue, on epithelial cells in intralobular striated ducts in sublingual salivary glands, on apical membranes of crypt cells throughout the small and large intestine, and on the reabsorptive duct in eccrine sweat glands. Detected on the equatorial segment of the sperm head (at protein level). Detected in nasal and bronchial superficial epithelium. Expressed by the central cells on the sebaceous glands, dermal adipocytes and, at lower levels, by epithelial cells.

The protein localises to the apical cell membrane. It localises to the early endosome membrane. Its subcellular location is the cell membrane. The protein resides in the recycling endosome membrane. It is found in the endoplasmic reticulum membrane. The protein localises to the nucleus. The catalysed reaction is ATP + H2O + closed Cl(-) channel = ADP + phosphate + open Cl(-) channel.. The enzyme catalyses chloride(in) = chloride(out). It catalyses the reaction hydrogencarbonate(in) = hydrogencarbonate(out). It carries out the reaction ATP + H2O = ADP + phosphate + H(+). In terms of biological role, epithelial ion channel that plays an important role in the regulation of epithelial ion and water transport and fluid homeostasis. Mediates the transport of chloride ions across the cell membrane. Possesses an intrinsic ATPase activity and utilizes ATP to gate its channel; the passive flow of anions through the channel is gated by cycles of ATP binding and hydrolysis by the ATP-binding domains. The ion channel is also permeable to HCO(3)(-); selectivity depends on the extracellular chloride concentration. In vitro, mediates ATP-dependent glutathione flux. Exerts its function also by modulating the activity of other ion channels and transporters. Plays an important role in airway fluid homeostasis. Contributes to the regulation of the pH and the ion content of the airway surface fluid layer and thereby plays an important role in defense against pathogens. Modulates the activity of the epithelial sodium channel (ENaC) complex, in part by regulating the cell surface expression of the ENaC complex. Inhibits the activity of the ENaC channel containing subunits SCNN1A, SCNN1B and SCNN1G. Inhibits the activity of the ENaC channel containing subunits SCNN1D, SCNN1B and SCNN1G, but not of the ENaC channel containing subunits SCNN1A, SCNN1B and SCNN1G. May regulate bicarbonate secretion and salvage in epithelial cells by regulating the transporter SLC4A7. Can inhibit the chloride channel activity of ANO1. Plays a role in the chloride and bicarbonate homeostasis during sperm epididymal maturation and capacitation. This chain is Cystic fibrosis transmembrane conductance regulator, found in Homo sapiens (Human).